A 172-amino-acid polypeptide reads, in one-letter code: 3-hydroxydecanoyl-[acyl-carrier-protein] dehydratase (172 aa).

H71 is an active-site residue.

Belongs to the thioester dehydratase family. FabA subfamily. Homodimer.

It localises to the cytoplasm. It carries out the reaction a (3R)-hydroxyacyl-[ACP] = a (2E)-enoyl-[ACP] + H2O. The catalysed reaction is (3R)-hydroxydecanoyl-[ACP] = (2E)-decenoyl-[ACP] + H2O. The enzyme catalyses (2E)-decenoyl-[ACP] = (3Z)-decenoyl-[ACP]. The protein operates within lipid metabolism; fatty acid biosynthesis. Functionally, necessary for the introduction of cis unsaturation into fatty acids. Catalyzes the dehydration of (3R)-3-hydroxydecanoyl-ACP to E-(2)-decenoyl-ACP and then its isomerization to Z-(3)-decenoyl-ACP. Can catalyze the dehydratase reaction for beta-hydroxyacyl-ACPs with saturated chain lengths up to 16:0, being most active on intermediate chain length. This is 3-hydroxydecanoyl-[acyl-carrier-protein] dehydratase from Klebsiella pneumoniae subsp. pneumoniae (strain ATCC 700721 / MGH 78578).